The chain runs to 356 residues: Histidinol-phosphate aminotransferase (356 aa).

Lys214 bears the N6-(pyridoxal phosphate)lysine mark.

Belongs to the class-II pyridoxal-phosphate-dependent aminotransferase family. Histidinol-phosphate aminotransferase subfamily. In terms of assembly, homodimer. The cofactor is pyridoxal 5'-phosphate.

It catalyses the reaction L-histidinol phosphate + 2-oxoglutarate = 3-(imidazol-4-yl)-2-oxopropyl phosphate + L-glutamate. It functions in the pathway amino-acid biosynthesis; L-histidine biosynthesis; L-histidine from 5-phospho-alpha-D-ribose 1-diphosphate: step 7/9. The polypeptide is Histidinol-phosphate aminotransferase (Shigella boydii serotype 18 (strain CDC 3083-94 / BS512)).